A 179-amino-acid chain; its full sequence is Enhancer of split m8 protein (179 aa).

The 56-residue stretch at 10 to 65 folds into the bHLH domain; that stretch reads YQKVKKPMLERQRRARMNKCLDNLKTLVAELRGDDGILRMDKAEMLESAVIFMRQQ. The 34-residue stretch at 83–116 folds into the Orange domain; the sequence is FKNGYMNAVNEVSRVMASTPGMSVDLGKSVMTHL. Positions 146–179 are disordered; sequence DKAPLSPASSGYHSDCDSPAPSPQPMQQPLWRPW. The WRPW motif signature appears at 176–179; sequence WRPW.

In terms of assembly, homodimer. Heterodimers with dpn. Transcription repression requires formation of a complex with a corepressor protein (Groucho).

The protein localises to the nucleus. Functionally, participates in the control of cell fate choice by uncommitted neuroectodermal cells in the embryo. Transcriptional repressor. Binds DNA on N-box motifs: 5'-CACNAG-3'. Part of the Notch signaling pathway. The sequence is that of Enhancer of split m8 protein from Drosophila melanogaster (Fruit fly).